The primary structure comprises 137 residues: MLQPKRTKYRKPHRVSYEGKAKGVKEINFGEFGLMALDGAWIDNHQIEAARIAMTRYMKRDGKIWMRIFPHMAMTKKPAEVRMGSGKGNPEKWVAVVKKGTIMFEVAQVNEQVAREALRLAMHKLPIRCKFVKRGEN.

Belongs to the universal ribosomal protein uL16 family. In terms of assembly, part of the 50S ribosomal subunit.

In terms of biological role, binds 23S rRNA and is also seen to make contacts with the A and possibly P site tRNAs. This chain is Large ribosomal subunit protein uL16, found in Mycoplasma mycoides subsp. mycoides SC (strain CCUG 32753 / NCTC 10114 / PG1).